The primary structure comprises 380 residues: Carbamoyl phosphate synthase small chain (380 aa).

Residues M1–F187 form a CPSase region. L-glutamine-binding residues include S55, G236, and G238. The 193-residue stretch at T188–A380 folds into the Glutamine amidotransferase type-1 domain. The Nucleophile role is filled by C264. L-glutamine is bound by residues F265, Q268, N306, G308, and F309. Catalysis depends on residues H354 and E356.

The protein belongs to the CarA family. As to quaternary structure, composed of two chains; the small (or glutamine) chain promotes the hydrolysis of glutamine to ammonia, which is used by the large (or ammonia) chain to synthesize carbamoyl phosphate. Tetramer of heterodimers (alpha,beta)4.

The catalysed reaction is hydrogencarbonate + L-glutamine + 2 ATP + H2O = carbamoyl phosphate + L-glutamate + 2 ADP + phosphate + 2 H(+). It carries out the reaction L-glutamine + H2O = L-glutamate + NH4(+). It participates in amino-acid biosynthesis; L-arginine biosynthesis; carbamoyl phosphate from bicarbonate: step 1/1. Its pathway is pyrimidine metabolism; UMP biosynthesis via de novo pathway; (S)-dihydroorotate from bicarbonate: step 1/3. In terms of biological role, small subunit of the glutamine-dependent carbamoyl phosphate synthetase (CPSase). CPSase catalyzes the formation of carbamoyl phosphate from the ammonia moiety of glutamine, carbonate, and phosphate donated by ATP, constituting the first step of 2 biosynthetic pathways, one leading to arginine and/or urea and the other to pyrimidine nucleotides. The small subunit (glutamine amidotransferase) binds and cleaves glutamine to supply the large subunit with the substrate ammonia. The sequence is that of Carbamoyl phosphate synthase small chain from Streptomyces avermitilis (strain ATCC 31267 / DSM 46492 / JCM 5070 / NBRC 14893 / NCIMB 12804 / NRRL 8165 / MA-4680).